Reading from the N-terminus, the 151-residue chain is uncharacterized protein (151 aa).

One can recognise a Nudix hydrolase domain in the interval M6–L143.

This is an uncharacterized protein from Escherichia coli (Bacteriophage T4).